The sequence spans 508 residues: Probable cytosol aminopeptidase (508 aa).

Residues Lys-274 and Asp-279 each contribute to the Mn(2+) site. The active site involves Lys-286. Residues Asp-297, Asp-356, and Glu-358 each contribute to the Mn(2+) site. Arg-360 is an active-site residue.

Belongs to the peptidase M17 family. It depends on Mn(2+) as a cofactor.

The protein resides in the cytoplasm. It carries out the reaction Release of an N-terminal amino acid, Xaa-|-Yaa-, in which Xaa is preferably Leu, but may be other amino acids including Pro although not Arg or Lys, and Yaa may be Pro. Amino acid amides and methyl esters are also readily hydrolyzed, but rates on arylamides are exceedingly low.. The catalysed reaction is Release of an N-terminal amino acid, preferentially leucine, but not glutamic or aspartic acids.. In terms of biological role, presumably involved in the processing and regular turnover of intracellular proteins. Catalyzes the removal of unsubstituted N-terminal amino acids from various peptides. This chain is Probable cytosol aminopeptidase, found in Paraburkholderia xenovorans (strain LB400).